Reading from the N-terminus, the 1482-residue chain is Cystic fibrosis transmembrane conductance regulator (1482 aa).

The Cytoplasmic segment spans residues methionine 1–phenylalanine 77. A helical membrane pass occupies residues phenylalanine 78 to glutamine 98. Positions phenylalanine 81–leucine 365 constitute an ABC transmembrane type-1 1 domain. Over proline 99 to tyrosine 122 the chain is Extracellular. Residues leucine 123 to histidine 146 traverse the membrane as a helical segment. Residues histidine 147–leucine 195 lie on the Cytoplasmic side of the membrane. A helical transmembrane segment spans residues alanine 196–tryptophan 216. Residues glutamate 217–serine 222 are Extracellular-facing. Residues alanine 223 to methionine 243 traverse the membrane as a helical segment. At methionine 244 to lysine 298 the chain is on the cytoplasmic side. The helical transmembrane segment at alanine 299–phenylalanine 319 threads the bilayer. Topologically, residues leucine 320–threonine 339 are extracellular. The helical transmembrane segment at isoleucine 340–valine 358 threads the bilayer. At glutamine 359–serine 859 the chain is on the cytoplasmic side. ATP contacts are provided by residues tryptophan 401, glycine 458 to threonine 465, and glutamine 493. In terms of domain architecture, ABC transporter 1 spans asparagine 423–glycine 646. A lipid anchor (S-palmitoyl cysteine) is attached at cysteine 524. Phosphoserine is present on residues serine 549 and serine 660. The disordered R region stretch occupies residues serine 654–glutamate 832. Serine 670 is subject to Phosphoserine; by PKA. Serine 686 is modified (phosphoserine). A Glycyl lysine isopeptide (Lys-Gly) (interchain with G-Cter in ubiquitin) cross-link involves residue lysine 688. Serine 700 and serine 712 each carry phosphoserine. Phosphothreonine is present on threonine 717. A phosphoserine mark is found at serine 738, serine 769, serine 791, serine 796, and serine 814. A helical membrane pass occupies residues leucine 860–alanine 880. The region spanning leucine 860–serine 1156 is the ABC transmembrane type-1 2 domain. At valine 881–isoleucine 919 the chain is on the extracellular side. 2 N-linked (GlcNAc...) asparagine glycosylation sites follow: asparagine 895 and asparagine 901. A discontinuously helical transmembrane segment spans residues tyrosine 920–histidine 940. Residues threonine 941–threonine 991 lie on the Cytoplasmic side of the membrane. The chain crosses the membrane as a helical span at residues isoleucine 992–leucine 1012. Over glutamine 1013–proline 1014 the chain is Extracellular. The helical transmembrane segment at tyrosine 1015 to leucine 1035 threads the bilayer. The Cytoplasmic segment spans residues histidine 1036–threonine 1096. Residues leucine 1097–phenylalanine 1117 form a helical membrane-spanning segment. Residues isoleucine 1118–glycine 1131 lie on the Extracellular side of the membrane. A helical membrane pass occupies residues isoleucine 1132–isoleucine 1152. Residues aspartate 1153 to leucine 1482 are Cytoplasmic-facing. The 234-residue stretch at methionine 1212 to proline 1445 folds into the ABC transporter 2 domain. ATP contacts are provided by residues tyrosine 1221 and glycine 1246–serine 1253. Residues arginine 1388–leucine 1482 are interaction with GORASP2. A lipid anchor (S-palmitoyl cysteine) is attached at cysteine 1397. Phosphoserine is present on residues serine 1446 and serine 1458. The interval lysine 1450 to leucine 1482 is disordered. Positions leucine 1451 to arginine 1463 are enriched in basic residues. Acidic residues predominate over residues glutamate 1472–leucine 1482. Residues threonine 1480–leucine 1482 carry the PDZ-binding motif.

This sequence belongs to the ABC transporter superfamily. ABCC family. CFTR transporter (TC 3.A.1.202) subfamily. As to quaternary structure, monomer; does not require oligomerization for channel activity. May form oligomers in the membrane. Interacts with SLC26A3, SLC26A6 and NHERF1. Interacts with SHANK2. Interacts with MYO6. Interacts (via C-terminus) with GOPC (via PDZ domain); this promotes CFTR internalization and thereby decreases channel activity. Interacts with SLC4A7 through NHERF1. Found in a complex with MYO5B and RAB11A. Interacts with ANO1. Interacts with SLC26A8. Interacts with AHCYL1; the interaction increases CFTR activity. Interacts with CSE1L. The core-glycosylated form interacts with GORASP2 (via PDZ GRASP-type 1 domain) in respone to ER stress. Interacts with MARCHF2; the interaction leads to CFTR ubiqtuitination and degradation. Interacts with ADGRG2. N-glycosylated. Post-translationally, phosphorylated; cAMP treatment promotes phosphorylation and activates the channel. Dephosphorylation decreases the ATPase activity (in vitro). Phosphorylation at PKA sites activates the channel. Phosphorylation at PKC sites enhances the response to phosphorylation by PKA. Phosphorylated by AMPK; this inhibits channel activity. In terms of processing, ubiquitinated, leading to its degradation in the lysosome. Deubiquitination by USP10 in early endosomes enhances its endocytic recycling to the cell membrane. Ubiquitinated by RNF185 during ER stress. Ubiquitinated by MARCHF2.

It localises to the apical cell membrane. It is found in the early endosome membrane. The protein localises to the cell membrane. Its subcellular location is the recycling endosome membrane. The protein resides in the endoplasmic reticulum membrane. It localises to the nucleus. It catalyses the reaction ATP + H2O + closed Cl(-) channel = ADP + phosphate + open Cl(-) channel.. The enzyme catalyses chloride(in) = chloride(out). The catalysed reaction is hydrogencarbonate(in) = hydrogencarbonate(out). It carries out the reaction ATP + H2O = ADP + phosphate + H(+). Epithelial ion channel that plays an important role in the regulation of epithelial ion and water transport and fluid homeostasis. Mediates the transport of chloride ions across the cell membrane. Possesses an intrinsic ATPase activity and utilizes ATP to gate its channel; the passive flow of anions through the channel is gated by cycles of ATP binding and hydrolysis by the ATP-binding domains. The ion channel is also permeable to HCO(3)(-); selectivity depends on the extracellular chloride concentration. Exerts its function also by modulating the activity of other ion channels and transporters. Contributes to the regulation of the pH and the ion content of the epithelial fluid layer. Modulates the activity of the epithelial sodium channel (ENaC) complex, in part by regulating the cell surface expression of the ENaC complex. May regulate bicarbonate secretion and salvage in epithelial cells by regulating the transporter SLC4A7. Can inhibit the chloride channel activity of ANO1. Plays a role in the chloride and bicarbonate homeostasis during sperm epididymal maturation and capacitation. The sequence is that of Cystic fibrosis transmembrane conductance regulator from Otolemur garnettii (Small-eared galago).